We begin with the raw amino-acid sequence, 510 residues long: Ribose import ATP-binding protein RbsA 1 (510 aa).

ABC transporter domains follow at residues 20–256 (LEMR…VGRD) and 266–510 (VTLG…TGNA). 52-59 (GENGAGKS) is an ATP binding site.

It belongs to the ABC transporter superfamily. Ribose importer (TC 3.A.1.2.1) family. In terms of assembly, the complex is composed of an ATP-binding protein (RbsA), two transmembrane proteins (RbsC) and a solute-binding protein (RbsB).

The protein resides in the cell inner membrane. It carries out the reaction D-ribose(out) + ATP + H2O = D-ribose(in) + ADP + phosphate + H(+). Functionally, part of the ABC transporter complex RbsABC involved in ribose import. Responsible for energy coupling to the transport system. This is Ribose import ATP-binding protein RbsA 1 from Agrobacterium fabrum (strain C58 / ATCC 33970) (Agrobacterium tumefaciens (strain C58)).